A 428-amino-acid chain; its full sequence is Elongation factor 1-alpha (428 aa).

The tr-type G domain maps to 5–225; sequence KPILNVAFIG…DGFQPPEKPT (221 aa). The interval 14–21 is G1; sequence GHVDAGKS. 14–21 provides a ligand contact to GTP; sequence GHVDAGKS. Serine 21 is a Mg(2+) binding site. A G2 region spans residues 70–74; sequence GVTID. Residues 91–94 are G3; sequence DCPG. GTP-binding positions include 91-95 and 149-152; these read DCPGH and NKMD. The G4 stretch occupies residues 149–152; sequence NKMD. The G5 stretch occupies residues 189 to 191; the sequence is ASL.

The protein belongs to the TRAFAC class translation factor GTPase superfamily. Classic translation factor GTPase family. EF-Tu/EF-1A subfamily.

Its subcellular location is the cytoplasm. It catalyses the reaction GTP + H2O = GDP + phosphate + H(+). Its function is as follows. GTP hydrolase that promotes the GTP-dependent binding of aminoacyl-tRNA to the A-site of ribosomes during protein biosynthesis. The chain is Elongation factor 1-alpha from Methanococcus vannielii (strain ATCC 35089 / DSM 1224 / JCM 13029 / OCM 148 / SB).